The chain runs to 499 residues: Cytochrome P450 ARB_01131 (499 aa).

A signal peptide spans 1-21; it reads MLSLIVACLVLPLICYKLVRS. N-linked (GlcNAc...) asparagine glycosylation occurs at Asn-23. Cys-437 serves as a coordination point for heme.

Belongs to the cytochrome P450 family. Requires heme as cofactor.

Together with an NADPH cytochrome P450 the enzyme system catalyzes the terminal hydroxylation as the first step in the assimilation of alkanes and fatty acids. The chain is Cytochrome P450 ARB_01131 from Arthroderma benhamiae (strain ATCC MYA-4681 / CBS 112371) (Trichophyton mentagrophytes).